We begin with the raw amino-acid sequence, 15639 residues long: FR901469 synthetase (15639 aa).

The Carrier 1 domain maps to 5–81 (HTSDGLRKLL…DLVDKIIEQQ (77 aa)). O-(pantetheine 4'-phosphoryl)serine is present on Ser-42. Residues 82 to 94 (LEEEEEDDDSLDN) show a composition bias toward acidic residues. Residues 82 to 105 (LEEEEEDDDSLDNESERDHSQKDL) form a disordered region. The segment at 140–553 (PCLSMQEGCL…RDFLPLTEDD (414 aa)) is condensation 1. Positions 579–971 (TISKQPDAVA…LGRRDTQVKI (393 aa)) are adenylation 1. A Carrier 2 domain is found at 1108–1184 (TPATAIEKEL…ELALVARSTT (77 aa)). Position 1145 is an O-(pantetheine 4'-phosphoryl)serine (Ser-1145). Residues 1219–1626 (RSSNRFNQSV…TITHLVKRLA (408 aa)) form an epimerase 1 region. Residues 1667-2097 (EDVLPCTPIQ…LGNLSLLTNN (431 aa)) form a condensation 2 region. The segment at 2122 to 2518 (QEAAKEYTNA…GRRDNQIKIR (397 aa)) is adenylation 2. The Carrier 3 domain occupies 2654-2730 (VPATALEKQL…ELALKAKSTT (77 aa)). Ser-2691 bears the O-(pantetheine 4'-phosphoryl)serine mark. The interval 2761–3176 (VSAGEHRYNQ…TELLHRLEQM (416 aa)) is epimerase 2. A condensation 3 region spans residues 3215–3640 (QDIYPCSPTQ…DDLIMMSPED (426 aa)). Positions 3669–4059 (TQPHAPAVAA…MGRIDSQIKI (391 aa)) are adenylation 3. Residues 4193–4269 (PPSNDAERMV…QLAAIVTQRG (77 aa)) form the Carrier 4 domain. An O-(pantetheine 4'-phosphoryl)serine modification is found at Ser-4230. The interval 4316–4714 (EDVYPCTPLQ…ILAHGTGLEE (399 aa)) is condensation 4. The adenylation 4 stretch occupies residues 4756–5149 (TEAASTRPDA…GRLDTQAKLR (394 aa)). In terms of domain architecture, Carrier 5 spans 5284 to 5360 (EPATIMERQL…DLASHIDHHT (77 aa)). O-(pantetheine 4'-phosphoryl)serine is present on Ser-5321. Residues 5402–5802 (EDIYPCTPLQ…TVFAQLCDSS (401 aa)) form a condensation 5 region. An adenylation 5 region spans residues 5847–6238 (KYPNEPAVHA…LGRRDSQMKV (392 aa)). The Carrier 6 domain occupies 6375 to 6451 (QPSTTAEIKL…DMAKIVEEHV (77 aa)). Ser-6412 is modified (O-(pantetheine 4'-phosphoryl)serine). Residues 6494-6889 (EDVYPATPLQ…RFAKVYQQLS (396 aa)) form a condensation 6 region. Positions 6952 to 7335 (WDGSMTYAEL…GRRDTQIKIR (384 aa)) are adenylation 6. In terms of domain architecture, Carrier 7 spans 7473-7546 (TAMEEQLRTV…QLALLASTDE (74 aa)). The residue at position 7507 (Ser-7507) is an O-(pantetheine 4'-phosphoryl)serine. An epimerase 3 region spans residues 7580-7992 (MGENRYNQSV…SKTLEELTTQ (413 aa)). The interval 8034-8459 (EDVFPASPMQ…QRMRNISLAS (426 aa)) is condensation 7. The tract at residues 8486 to 8882 (QKSVHARPDA…GRRDTQVKIR (397 aa)) is adenylation 7. The Carrier 8 domain maps to 9015-9091 (QPATDAERQL…DLAKTIQDSE (77 aa)). At Ser-9052 the chain carries O-(pantetheine 4'-phosphoryl)serine. The condensation 8 stretch occupies residues 9136–9535 (EDVYPCTPLQ…FAAIFRQLCD (400 aa)). The segment at 9583 to 9974 (KNPHAIAVNA…GRRDNQMKIR (392 aa)) is adenylation 8. The region spanning 10110 to 10186 (EPATPMEMQL…GLAALIQKQI (77 aa)) is the Carrier 9 domain. Ser-10147 carries the post-translational modification O-(pantetheine 4'-phosphoryl)serine. The interval 10186–10208 (IDEEEEYDDSEEEEEDDEEEVRE) is disordered. A compositionally biased stretch (acidic residues) spans 10187–10206 (DEEEEYDDSEEEEEDDEEEV). Positions 10240–10662 (VEDVYPCTPL…VLSETDKTKI (423 aa)) are condensation 9. The interval 10683–11082 (KQAIERPNAP…GRRDTQIKIR (400 aa)) is adenylation 9. Positions 11217-11293 (EPATGMERHL…DLARETESQG (77 aa)) constitute a Carrier 10 domain. An O-(pantetheine 4'-phosphoryl)serine modification is found at Ser-11254. Residues 11329-11725 (EDVYPCTPLQ…ETIFQQLSSV (397 aa)) are condensation 10. Residues 11770 to 12165 (FKRTADKQPE…GRRDTQIKVR (396 aa)) form an adenylation 10 region. The Carrier 11 domain occupies 12298–12374 (EPSTEMERRI…DLAAAVQGRI (77 aa)). Ser-12335 carries the O-(pantetheine 4'-phosphoryl)serine modification. Residues 12418–12830 (EDVYPATPLQ…IQDIEMVSEQ (413 aa)) are condensation 11. The tract at residues 12861–13249 (SRADEIAICA…GRRDTQIKIR (389 aa)) is adenylation 11. Residues 13383-13459 (MPGTVQEEQL…QLGQKVKEAV (77 aa)) form the Carrier 12 domain. Ser-13420 carries the O-(pantetheine 4'-phosphoryl)serine modification. Residues 13476-13901 (APIQQMFFEQ…LKDMTSTLLQ (426 aa)) are epimerase 4. A condensation 12 region spans residues 13940-14369 (EDILPCSPIQ…SIVGEHDLQQ (430 aa)). The interval 14390–14789 (RDAAHRTPDA…GRGDGQIKIR (400 aa)) is adenylation 12. A Carrier 13 domain is found at 14916-14992 (LPASADEGAL…DMASVASAAR (77 aa)). O-(pantetheine 4'-phosphoryl)serine is present on Ser-14953. The interval 15062–15433 (QHAVDLAALK…DIMVRLASQQ (372 aa)) is condensation 13. 2 disordered regions span residues 15434–15511 (EGTV…ENRQ) and 15617–15639 (VQTN…KGHI). The segment covering 15455-15472 (NGTNGSNGDGTDAANGIG) has biased composition (low complexity). Residues 15482 to 15494 (AVEKSSGDAEVEK) are compositionally biased toward basic and acidic residues. A compositionally biased stretch (polar residues) spans 15495–15511 (VSTNGHADNNTSAENRQ).

The protein belongs to the NRP synthetase family.

The protein operates within antifungal biosynthesis. In terms of biological role, nonribosomal peptide synthetase; part of the gene cluster that mediates the biosynthesis of the antifungal antibiotic FR901469, an inhibitor of beta-1,3-glucansynthase, exerting antifungal activity against the pathogenes Candida albicans and Aspergillus fumigatus. FR901469 is a cyclic depsipeptide containing 12 amino acid residues and a fatty acid chain. The NRPS frbI contains 12 modules responsible for the formation of the depsipeptide backbone which is denoted as Acyl-Thr-Ala-Tyr-Val-4OHPro-Thr-Thr-3OHPro-threo3OHGln-Gly-Thr-Orn-OH (C71H116N14O23). The PKS frbB is probably involved in the production of the hydrocarbon chain, and the acyl-CoA ligase frbC might be involved in the transport of the chain to the peptide ptoduct of frbI. Because FR901469 contains 3 hydroxylated amino acid residues, the 3 oxygenases frbA, frbH, and frbJ might be participating in amino acid hydroxylation. As no thioesterase domains were detected in frbI or frbB, the thioesterases frbD and frbE may instead release and cyclize the products of the NRPS and PKS, respectively. This is FR901469 synthetase from Dothideomycetidae sp. (strain 11243) (Fungal sp. (strain No.11243)).